The primary structure comprises 184 residues: ATP synthase subunit b, chloroplastic (184 aa).

A helical transmembrane segment spans residues 27-49; the sequence is LATNPINLSVVLGVLIFFGKGVL.

The protein belongs to the ATPase B chain family. F-type ATPases have 2 components, F(1) - the catalytic core - and F(0) - the membrane proton channel. F(1) has five subunits: alpha(3), beta(3), gamma(1), delta(1), epsilon(1). F(0) has four main subunits: a(1), b(1), b'(1) and c(10-14). The alpha and beta chains form an alternating ring which encloses part of the gamma chain. F(1) is attached to F(0) by a central stalk formed by the gamma and epsilon chains, while a peripheral stalk is formed by the delta, b and b' chains.

The protein localises to the plastid. The protein resides in the chloroplast thylakoid membrane. F(1)F(0) ATP synthase produces ATP from ADP in the presence of a proton or sodium gradient. F-type ATPases consist of two structural domains, F(1) containing the extramembraneous catalytic core and F(0) containing the membrane proton channel, linked together by a central stalk and a peripheral stalk. During catalysis, ATP synthesis in the catalytic domain of F(1) is coupled via a rotary mechanism of the central stalk subunits to proton translocation. In terms of biological role, component of the F(0) channel, it forms part of the peripheral stalk, linking F(1) to F(0). The chain is ATP synthase subunit b, chloroplastic from Citrus sinensis (Sweet orange).